The sequence spans 366 residues: Glutamate 5-kinase (366 aa).

K17 serves as a coordination point for ATP. S57, D144, and N156 together coordinate substrate. ATP is bound by residues 176-177 (SD) and 216-222 (TGGMVSK). A PUA domain is found at 278 to 356 (SGALTLDDGA…SDLPAEMRRP (79 aa)).

Belongs to the glutamate 5-kinase family.

It localises to the cytoplasm. The enzyme catalyses L-glutamate + ATP = L-glutamyl 5-phosphate + ADP. Its pathway is amino-acid biosynthesis; L-proline biosynthesis; L-glutamate 5-semialdehyde from L-glutamate: step 1/2. Its function is as follows. Catalyzes the transfer of a phosphate group to glutamate to form L-glutamate 5-phosphate. The sequence is that of Glutamate 5-kinase from Mycolicibacterium vanbaalenii (strain DSM 7251 / JCM 13017 / BCRC 16820 / KCTC 9966 / NRRL B-24157 / PYR-1) (Mycobacterium vanbaalenii).